The sequence spans 160 residues: Transcription elongation factor GreB (160 aa).

It belongs to the GreA/GreB family. GreB subfamily.

Necessary for efficient RNA polymerase transcription elongation past template-encoded arresting sites. The arresting sites in DNA have the property of trapping a certain fraction of elongating RNA polymerases that pass through, resulting in locked ternary complexes. Cleavage of the nascent transcript by cleavage factors such as GreA or GreB allows the resumption of elongation from the new 3'terminus. GreB releases sequences of up to 9 nucleotides in length. This Vibrio vulnificus (strain CMCP6) protein is Transcription elongation factor GreB.